The sequence spans 226 residues: UPF0173 metal-dependent hydrolase TM_1162 (226 aa).

The protein belongs to the UPF0173 family.

The protein is UPF0173 metal-dependent hydrolase TM_1162 of Thermotoga maritima (strain ATCC 43589 / DSM 3109 / JCM 10099 / NBRC 100826 / MSB8).